The following is a 140-amino-acid chain: Putative pre-16S rRNA nuclease (140 aa).

It belongs to the YqgF nuclease family.

The protein localises to the cytoplasm. Functionally, could be a nuclease involved in processing of the 5'-end of pre-16S rRNA. This Lachnospira eligens (strain ATCC 27750 / DSM 3376 / VPI C15-48 / C15-B4) (Eubacterium eligens) protein is Putative pre-16S rRNA nuclease.